Here is a 277-residue protein sequence, read N- to C-terminus: 5'-nucleotidase SurE (277 aa).

Residues Asp-14, Asp-15, Ser-46, and Asn-104 each coordinate a divalent metal cation.

The protein belongs to the SurE nucleotidase family. A divalent metal cation serves as cofactor.

Its subcellular location is the cytoplasm. It carries out the reaction a ribonucleoside 5'-phosphate + H2O = a ribonucleoside + phosphate. In terms of biological role, nucleotidase that shows phosphatase activity on nucleoside 5'-monophosphates. The polypeptide is 5'-nucleotidase SurE (Picosynechococcus sp. (strain ATCC 27264 / PCC 7002 / PR-6) (Agmenellum quadruplicatum)).